A 143-amino-acid polypeptide reads, in one-letter code: Nucleoside diphosphate kinase (143 aa).

K11, F59, R87, T93, R104, and N114 together coordinate ATP. H117 functions as the Pros-phosphohistidine intermediate in the catalytic mechanism.

It belongs to the NDK family. Homotetramer. Mg(2+) is required as a cofactor.

The protein resides in the cytoplasm. It catalyses the reaction a 2'-deoxyribonucleoside 5'-diphosphate + ATP = a 2'-deoxyribonucleoside 5'-triphosphate + ADP. The catalysed reaction is a ribonucleoside 5'-diphosphate + ATP = a ribonucleoside 5'-triphosphate + ADP. Functionally, major role in the synthesis of nucleoside triphosphates other than ATP. The ATP gamma phosphate is transferred to the NDP beta phosphate via a ping-pong mechanism, using a phosphorylated active-site intermediate. The protein is Nucleoside diphosphate kinase of Psychrobacter cryohalolentis (strain ATCC BAA-1226 / DSM 17306 / VKM B-2378 / K5).